A 133-amino-acid polypeptide reads, in one-letter code: uncharacterized protein (133 aa).

This is an uncharacterized protein from Caenorhabditis elegans.